Consider the following 297-residue polypeptide: MNVRRSLLGLTFCTCYLASHLTNKYVLSVLKFTYPTLFQGWQTFIGGLLLHMSWKLGWVELHSSPRSDVLIWLPASALFVGIIYAGSKALSRLAVPVFFILHNVAEVLTCGYQKCVWKEKTSLSKICSALFLLAAAGCLPFQDSQFDPDGYFWALIHIFCVGSYKILRKSRKPTVLSDIDQQYLNYIFSMVLLAFASHPTGDLFGALDFPFLYFYRFHGSCCASGVLGFFLMLSTVRLRSILAPGQCAAWILCAKVVTAGLSMLLFDMALTKATVGCFLLGGLGEALLVFSERRSSS.

A run of 10 helical transmembrane segments spans residues 7–29 (LLGL…VLSV), 32–52 (FTYP…LLHM), 69–89 (VLIW…GSKA), 93–113 (LAVP…CGYQ), 121–141 (TSLS…CLPF), 146–166 (FDPD…SYKI), 187–207 (IFSM…FGAL), 211–231 (FLYF…GFFL), 250–270 (WILC…DMAL), and 271–291 (TKAT…LVFS).

It belongs to the nucleotide-sugar transporter family. SLC35A subfamily. Widely expressed with high expression in lung.

It is found in the golgi apparatus. The protein localises to the cis-Golgi network membrane. Functionally, golgi-localized UDP-N-acetylglucosamine (UDP-GlcNAc) transporter that transports UDP-N-acetylglucosamine into Golgi lumen. Contributes to lysosomal targeting of NPC2, a key protein required for lysosomal cholesterol exiting, and that utilizes the mannose-6-phosphate (M6P) modification pathway for its lysosomal targeting. The sequence is that of UDP-N-acetylglucosamine transporter TMEM241 (Tmem241) from Mus musculus (Mouse).